The primary structure comprises 521 residues: Glucosidase 2 subunit beta (521 aa).

A signal peptide spans 1–14 (MLLLLLLLLPLCWA). Serine 24 carries the phosphoserine modification. LDL-receptor class A domains are found at residues 37-71 (FTCL…AACP) and 69-113 (ACPN…TVCE). 2 disulfides stabilise this stretch: cysteine 39/cysteine 58 and cysteine 56/cysteine 70. Aspartate 49 contributes to the substrate binding site. Ca(2+)-binding residues include glutamine 50, aspartate 53, tyrosine 55, aspartate 57, aspartate 63, and glutamate 64. Aspartate 53 serves as a coordination point for substrate. The N-linked (GlcNAc...) asparagine glycan is linked to asparagine 72. Intrachain disulfides connect cysteine 77-cysteine 99, cysteine 97-cysteine 112, and cysteine 100-cysteine 116. Serine 89 carries the post-translational modification Phosphoserine; by PKC. The Ca(2+) site is built by arginine 91, aspartate 94, valine 96, aspartate 98, aspartate 104, and glutamate 105. Lysine 166 is modified (N6-succinyllysine). Serine 168 carries the phosphoserine modification. 2 consecutive EF-hand domains span residues 209 to 244 (REQE…DTDG) and 245 to 290 (DGAL…TDIP). 5 residues coordinate Ca(2+): aspartate 222, asparagine 224, aspartate 226, methionine 228, and glutamate 233. Disordered regions lie at residues 226-267 (DGMV…DTTS) and 280-350 (YRSE…EKMP). Composition is skewed to acidic residues over residues 241-253 (DTDG…EEEA) and 308-331 (TEEE…EEEA). Positions 332 to 343 (PPPLQPPQPPSP) are enriched in pro residues. Phosphoserine; by PKC is present on residues serine 376 and serine 383. The region spanning 406 to 507 (SQCYELTTNE…ELMTPAACPE (102 aa)) is the MRH domain. Cysteine 408 and cysteine 421 are joined by a disulfide. Residue serine 427 is modified to Phosphoserine; by PKC. Intrachain disulfides connect cysteine 464–cysteine 493 and cysteine 478–cysteine 505. An N-linked (GlcNAc...) asparagine glycan is attached at asparagine 469. The short motif at 518–521 (HDEL) is the Prevents secretion from ER element.

Heterodimer of a catalytic alpha subunit (GANAB) and a beta subunit (PRKCSH). Binds glycosylated PTPRC. In terms of tissue distribution, expressed in kidney (at protein level).

The protein localises to the endoplasmic reticulum. The protein operates within glycan metabolism; N-glycan metabolism. Functionally, regulatory subunit of glucosidase II that cleaves sequentially the 2 innermost alpha-1,3-linked glucose residues from the Glc(2)Man(9)GlcNAc(2) oligosaccharide precursor of immature glycoproteins. Required for efficient PKD1/Polycystin-1 biogenesis and trafficking to the plasma membrane of the primary cilia. This chain is Glucosidase 2 subunit beta, found in Mus musculus (Mouse).